Consider the following 414-residue polypeptide: Small ribosomal subunit protein mS46 (414 aa).

Positions 20–35 (LNAQQQQRPFSSTTTR) are enriched in polar residues. Disordered stretches follow at residues 20 to 71 (LNAQ…EAAV) and 168 to 229 (AGPG…DAPP). Composition is skewed to low complexity over residues 45-59 (PAAA…APGP) and 168-200 (AGPG…PFGA). The span at 205 to 224 (PAGDKKRSGGSGDKRPRGDD) shows a compositional bias: basic and acidic residues.

This sequence belongs to the mitochondrion-specific ribosomal protein mS46 family. In terms of assembly, component of the mitochondrial small ribosomal subunit (mt-SSU). Mature N.crassa 74S mitochondrial ribosomes consist of a small (37S) and a large (54S) subunit. The 37S small subunit contains a 16S ribosomal RNA (16S mt-rRNA) and 32 different proteins. The 54S large subunit contains a 23S rRNA (23S mt-rRNA) and 42 different proteins.

The protein resides in the mitochondrion. In terms of biological role, component of the mitochondrial ribosome (mitoribosome), a dedicated translation machinery responsible for the synthesis of mitochondrial genome-encoded proteins, including at least some of the essential transmembrane subunits of the mitochondrial respiratory chain. The mitoribosomes are attached to the mitochondrial inner membrane and translation products are cotranslationally integrated into the membrane. This is Small ribosomal subunit protein mS46 (rsm28) from Neurospora crassa (strain ATCC 24698 / 74-OR23-1A / CBS 708.71 / DSM 1257 / FGSC 987).